We begin with the raw amino-acid sequence, 247 residues long: Dihydroorotate dehydrogenase B (NAD(+)), electron transfer subunit (247 aa).

In terms of domain architecture, FAD-binding FR-type spans 2 to 96; it reads RWKMKARVLS…TGPHGNGFEI (95 aa). FAD contacts are provided by residues 49-52, 64-66, and 71-72; these read RPFS, LYQ, and GT. The [2Fe-2S] cluster site is built by cysteine 210, cysteine 215, cysteine 218, and cysteine 234.

The protein belongs to the PyrK family. Heterotetramer of 2 PyrK and 2 PyrD type B subunits. The cofactor is [2Fe-2S] cluster. FAD serves as cofactor.

It functions in the pathway pyrimidine metabolism; UMP biosynthesis via de novo pathway; orotate from (S)-dihydroorotate (NAD(+) route): step 1/1. In terms of biological role, responsible for channeling the electrons from the oxidation of dihydroorotate from the FMN redox center in the PyrD type B subunit to the ultimate electron acceptor NAD(+). The protein is Dihydroorotate dehydrogenase B (NAD(+)), electron transfer subunit of Caldanaerobacter subterraneus subsp. tengcongensis (strain DSM 15242 / JCM 11007 / NBRC 100824 / MB4) (Thermoanaerobacter tengcongensis).